We begin with the raw amino-acid sequence, 660 residues long: Septation initiation protein sid4 (660 aa).

Disordered regions lie at residues 79–243 (TKKE…QQHF), 368–396 (STTV…PDTK), and 459–503 (RHTS…PAKN). Composition is skewed to polar residues over residues 125-138 (SFNS…STPY), 156-176 (SNSP…QSPK), and 222-243 (RPNQ…QQHF). Residues 384–396 (STKDFKEQKPDTK) show a composition bias toward basic and acidic residues. Composition is skewed to polar residues over residues 459-480 (RHTS…ITTK) and 488-497 (KENTMLNDGS).

In terms of assembly, homodimer. Interacts with cdc11, sad1, plo1 and dma1.

The protein resides in the cytoplasm. The protein localises to the cytoskeleton. Its subcellular location is the microtubule organizing center. It is found in the spindle pole body. Its function is as follows. Required for activation of the spg1 GTPase signaling cascade which leads to the initiation of septation and the subsequent termination of mitosis. May act as a scaffold at the spindle pole body to which other components of the spg1 signaling cascade attach. This is Septation initiation protein sid4 (sid4) from Schizosaccharomyces pombe (strain 972 / ATCC 24843) (Fission yeast).